Consider the following 259-residue polypeptide: 5'-nucleotidase SurE (259 aa).

Residues aspartate 8, aspartate 9, serine 41, and asparagine 93 each coordinate a divalent metal cation.

This sequence belongs to the SurE nucleotidase family. The cofactor is a divalent metal cation.

It is found in the cytoplasm. It catalyses the reaction a ribonucleoside 5'-phosphate + H2O = a ribonucleoside + phosphate. In terms of biological role, nucleotidase that shows phosphatase activity on nucleoside 5'-monophosphates. The polypeptide is 5'-nucleotidase SurE (Verminephrobacter eiseniae (strain EF01-2)).